A 155-amino-acid chain; its full sequence is UPF0225 protein ECA2332 (155 aa).

This sequence belongs to the UPF0225 family.

The protein is UPF0225 protein ECA2332 of Pectobacterium atrosepticum (strain SCRI 1043 / ATCC BAA-672) (Erwinia carotovora subsp. atroseptica).